Reading from the N-terminus, the 463-residue chain is Glutamate--tRNA ligase 2 (463 aa).

The 'HIGH' region motif lies at 11 to 21 (PSPTGYLHIGG). The short motif at 240–244 (KLSKR) is the 'KMSKS' region element. Lys-243 is a binding site for ATP.

This sequence belongs to the class-I aminoacyl-tRNA synthetase family. Glutamate--tRNA ligase type 1 subfamily. Monomer.

The protein resides in the cytoplasm. The catalysed reaction is tRNA(Glu) + L-glutamate + ATP = L-glutamyl-tRNA(Glu) + AMP + diphosphate. Functionally, catalyzes the attachment of glutamate to tRNA(Glu) in a two-step reaction: glutamate is first activated by ATP to form Glu-AMP and then transferred to the acceptor end of tRNA(Glu). This Campylobacter jejuni subsp. jejuni serotype O:2 (strain ATCC 700819 / NCTC 11168) protein is Glutamate--tRNA ligase 2.